Consider the following 413-residue polypeptide: Multifunctional CCA protein (413 aa).

Positions 8 and 11 each coordinate ATP. Positions 8 and 11 each coordinate CTP. Mg(2+) is bound by residues Glu21 and Asp23. ATP is bound by residues Arg91, Arg137, and Arg140. Arg91, Arg137, and Arg140 together coordinate CTP. The region spanning 228–329 (TGEHTLLALA…LKLLEGLDLF (102 aa)) is the HD domain.

This sequence belongs to the tRNA nucleotidyltransferase/poly(A) polymerase family. Bacterial CCA-adding enzyme type 1 subfamily. As to quaternary structure, monomer. Can also form homodimers and oligomers. It depends on Mg(2+) as a cofactor. The cofactor is Ni(2+).

It carries out the reaction a tRNA precursor + 2 CTP + ATP = a tRNA with a 3' CCA end + 3 diphosphate. The catalysed reaction is a tRNA with a 3' CCA end + 2 CTP + ATP = a tRNA with a 3' CCACCA end + 3 diphosphate. Its function is as follows. Catalyzes the addition and repair of the essential 3'-terminal CCA sequence in tRNAs without using a nucleic acid template. Adds these three nucleotides in the order of C, C, and A to the tRNA nucleotide-73, using CTP and ATP as substrates and producing inorganic pyrophosphate. tRNA 3'-terminal CCA addition is required both for tRNA processing and repair. Also involved in tRNA surveillance by mediating tandem CCA addition to generate a CCACCA at the 3' terminus of unstable tRNAs. While stable tRNAs receive only 3'-terminal CCA, unstable tRNAs are marked with CCACCA and rapidly degraded. In Alkalilimnicola ehrlichii (strain ATCC BAA-1101 / DSM 17681 / MLHE-1), this protein is Multifunctional CCA protein.